The chain runs to 100 residues: Small ribosomal subunit protein uS14c (100 aa).

Belongs to the universal ribosomal protein uS14 family. In terms of assembly, part of the 30S ribosomal subunit.

The protein resides in the plastid. It is found in the chloroplast. Functionally, binds 16S rRNA, required for the assembly of 30S particles. The protein is Small ribosomal subunit protein uS14c of Morus indica (Mulberry).